The chain runs to 795 residues: MLSQVYRYGFQPFNQHLLPWVQCTTISRSHCIQPSVIRHVRSWSNIPFITVPLSRTHGKSFAHRSELKHAKRIVVKLGSAVVTRGDECGLALGRLASIVEQVSVLQNQGREMMLVTSGAVAFGKQRLRHEILLSQSVRQALHSGQNQLKEMAIPVLEARACAAAGQSGLMALYEAMFTQYSICAAQILVTNLDFHDEQKRRNLNGTLHELLRMNIVPIVNTNDAVVPPAEPNSDLQGVNVISVKDNDSLAARLAVEMKTDLLIVLSDVEGLFDSPPGSDDAKLIDIFYPGDQQSVTFGTKSRVGMGGMEAKVKAALWALQGGTSVVIANGTHPKVSGHVITDIVEGKKVGTFFSEVKPAGPTVEQQGEMARSGGRMLATLEPEQRAEIIHHLADLLTDQRDEILLANKKDLEEAEGRLAPPLLKRLSLSTSKLNSLAIGLRQIAASSQDSVGRVLRRTRIAKNLELEQVTVPIGVLLVIFESRPDCLPQVAALAIASGNGLLLKGGKEAAHSNRILHLLTQEALSIHGVKEAVQLVNTREEVEDLCRLDKMIDLIIPRGSSQLVRDIQKAAKGIPVMGHSEGICHMYVDSEASVDKVTRLVRDSKCEYPAACNALETLLIHRDLLRTPLFDQIIDMLRVEQVKIHAGPKFASYLTFSPSEVKSLRTEYGDLELCIEVVDNVQDAIDHIHKYGSSHTDVIVTENENTAEFFLQHVDSACVFWNASTRFSDGYRFGLGAEVGISTSRIHARGPVGLEGLLTTKWLLRGKDHVVSDFSEHGSLKYLHENLPIPQRNTN.

The tract at residues 1-361 is glutamate 5-kinase; that stretch reads MLSQVYRYGF…FFSEVKPAGP (361 aa). Ser117, Asp223, and Asn246 together coordinate substrate. Residues 266–267 and 305–311 contribute to the ATP site; these read SD and MGGMEAK. Lys311, Lys347, and Lys550 each carry N6-succinyllysine. Positions 362–795 are gamma-glutamyl phosphate reductase; it reads TVEQQGEMAR…NLPIPQRNTN (434 aa).

It in the N-terminal section; belongs to the glutamate 5-kinase family. In the C-terminal section; belongs to the gamma-glutamyl phosphate reductase family. In terms of assembly, can form homodimers/multimers.

Its subcellular location is the mitochondrion matrix. The enzyme catalyses L-glutamate + ATP = L-glutamyl 5-phosphate + ADP. It catalyses the reaction L-glutamate 5-semialdehyde + phosphate + NADP(+) = L-glutamyl 5-phosphate + NADPH + H(+). It participates in amino-acid biosynthesis; L-proline biosynthesis; L-glutamate 5-semialdehyde from L-glutamate: step 1/2. The protein operates within amino-acid biosynthesis; L-proline biosynthesis; L-glutamate 5-semialdehyde from L-glutamate: step 2/2. In terms of biological role, bifunctional enzyme that converts glutamate to glutamate 5-semialdehyde, an intermediate in the biosynthesis of proline, ornithine and arginine. The sequence is that of Delta-1-pyrroline-5-carboxylate synthase (ALDH18A1) from Pongo abelii (Sumatran orangutan).